A 168-amino-acid polypeptide reads, in one-letter code: Small ribosomal subunit protein uS5 (168 aa).

The region spanning 11 to 74 (YSEKVVKIDR…EAAKKHLVKI (64 aa)) is the S5 DRBM domain.

The protein belongs to the universal ribosomal protein uS5 family. In terms of assembly, part of the 30S ribosomal subunit. Contacts proteins S4 and S8.

In terms of biological role, with S4 and S12 plays an important role in translational accuracy. Located at the back of the 30S subunit body where it stabilizes the conformation of the head with respect to the body. This chain is Small ribosomal subunit protein uS5, found in Leptospira borgpetersenii serovar Hardjo-bovis (strain JB197).